A 311-amino-acid polypeptide reads, in one-letter code: Homeobox protein Hox-B1a (311 aa).

Residues 217 to 276 (QNTIRTNFTTKQLTELEKEFHFSKYLTRARRVEIAATLELNETQVKIWFQNRRMKQKKRE) constitute a DNA-binding region (homeobox). A disordered region spans residues 267–311 (NRRMKQKKREKEGLAPASSTSSKDLEDQSDHSTSTSPEASPSPDS). Low complexity predominate over residues 298–311 (STSTSPEASPSPDS).

Belongs to the Antp homeobox family. Labial subfamily.

The protein resides in the nucleus. Its function is as follows. Sequence-specific transcription factor which is part of a developmental regulatory system that provides cells with specific positional identities on the anterior-posterior axis. The protein is Homeobox protein Hox-B1a (hoxb1a) of Danio rerio (Zebrafish).